A 169-amino-acid polypeptide reads, in one-letter code: MCKPRGPKLKTYRPRRVLDWTVKLLCRQAADEKDFKKTSTYSKLDVEAMHSSFFFNNAPIEEAEASSQPEAPFLLPLKKISIFFAKKNYLYNKGKFSRNKQTYRTGVYLCIWLTVLTVVGLYFYFYLMSMKFTYNYLLFLFFLGLFFYKFFIKKNNKKFEVHTDLFENF.

The protein localises to the mitochondrion. This is an uncharacterized protein from Paramecium tetraurelia.